The following is a 99-amino-acid chain: Aspartyl/glutamyl-tRNA(Asn/Gln) amidotransferase subunit C (99 aa).

The protein belongs to the GatC family. In terms of assembly, heterotrimer of A, B and C subunits.

It catalyses the reaction L-glutamyl-tRNA(Gln) + L-glutamine + ATP + H2O = L-glutaminyl-tRNA(Gln) + L-glutamate + ADP + phosphate + H(+). The catalysed reaction is L-aspartyl-tRNA(Asn) + L-glutamine + ATP + H2O = L-asparaginyl-tRNA(Asn) + L-glutamate + ADP + phosphate + 2 H(+). Allows the formation of correctly charged Asn-tRNA(Asn) or Gln-tRNA(Gln) through the transamidation of misacylated Asp-tRNA(Asn) or Glu-tRNA(Gln) in organisms which lack either or both of asparaginyl-tRNA or glutaminyl-tRNA synthetases. The reaction takes place in the presence of glutamine and ATP through an activated phospho-Asp-tRNA(Asn) or phospho-Glu-tRNA(Gln). This Cupriavidus metallidurans (strain ATCC 43123 / DSM 2839 / NBRC 102507 / CH34) (Ralstonia metallidurans) protein is Aspartyl/glutamyl-tRNA(Asn/Gln) amidotransferase subunit C.